We begin with the raw amino-acid sequence, 390 residues long: MSRRQEICRNFQRGSCKYGAQCRYLHASPHQQQQQQQAKPNPFGFGTGSRQQQQPSFGSQFQQQQQQQQKPNPFGFGVQGANAQSRNAPGPAKPFQNKWVRDPSAPTKQTEAVQPPQAQAAHTSCEDPQSCRQQISEDFKNEAPIWKLTCYAHLRNGPCNIKGDISFEELRAKAYEEGKQGHSLQSIVEGERNLQNAKLMEFTNLLNSARPSQTPSFPTMSSFPEVKNNSSFGASQTNGPPVFSSFSQIGAATNIGPGPGTTAPGMPASSPFGHPSSAPLAAPTFGSSQMKFGVSSVFGNQGSGQPFGSFQAPRFPSSKSPASSVQHRDIDRQSQELLNGMVTPPSVMFEESVGNNKNENQDDSIWLKEKWAIGEIPLDEPPQRHVSHVF.

The C3H1-type zinc-finger motif lies at 2–29; that stretch reads SRRQEICRNFQRGSCKYGAQCRYLHASP. The disordered stretch occupies residues 27–129; it reads ASPHQQQQQQ…AAHTSCEDPQ (103 aa). Low complexity predominate over residues 48-76; sequence GSRQQQQPSFGSQFQQQQQQQQKPNPFGF. Polar residues predominate over residues 106–129; sequence PTKQTEAVQPPQAQAAHTSCEDPQ. Positions 146 to 211 are required for transcriptional activation activity; sequence WKLTCYAHLR…FTNLLNSARP (66 aa). Residues 230–248 show a composition bias toward polar residues; sequence SSFGASQTNGPPVFSSFSQ. Positions 230–284 are disordered; sequence SSFGASQTNGPPVFSSFSQIGAATNIGPGPGTTAPGMPASSPFGHPSSAPLAAPT. Low complexity predominate over residues 250–268; that stretch reads GAATNIGPGPGTTAPGMPA.

Interacts with GSK1 and GSK4. Phosphorylated on serine and threonine residues by GSK1. Phosphorylation represses nuclear localization. In terms of tissue distribution, expressed in the adaxial face of the collar, nodes and the basal region of elongating internodes.

Its subcellular location is the nucleus. The protein localises to the cytoplasm. In terms of biological role, transcriptional activator that binds double-stranded DNA and the single-stranded RNA polymers poly(rA), poly(rU) and poly(rG), but not poly(rC). Mediates optimal plant architecture through brassinosteroid (BR) signaling. May act as a negative regulator in sterol homeostasis. Acts as a negative regulator of BR signaling. Binds to the specific DNA sequence 5'-CTCGC-3' of BZR1 promoter and negatively regulates BZR1. Acts as an antagonistic transcription factor of BZR1 to attenuate the BR signaling pathway and regulate leaf bending. Represses the expression of ILI1, and activates that of IBH1 to balance the regulation activity of BZR1. This chain is Zinc finger CCCH domain-containing protein 46, found in Oryza sativa subsp. japonica (Rice).